We begin with the raw amino-acid sequence, 283 residues long: Succinate dehydrogenase [ubiquinone] iron-sulfur subunit, mitochondrial (283 aa).

One can recognise a 2Fe-2S ferredoxin-type domain in the interval 66–145 (KKPTLQTYSI…PVKIYPLPHM (80 aa)). The [2Fe-2S] cluster site is built by C105, C110, C113, and C125. Residues 186–216 (DRKKLDGMYECILCACCSTSCPSYWWNQDEY) enclose the 4Fe-4S ferredoxin-type domain. The [4Fe-4S] cluster site is built by C196, C199, and C202. [3Fe-4S] cluster is bound at residue C206. W211 provides a ligand contact to a ubiquinone. Positions 253 and 259 each coordinate [3Fe-4S] cluster. C263 lines the [4Fe-4S] cluster pocket.

Belongs to the succinate dehydrogenase/fumarate reductase iron-sulfur protein family. Component of complex II composed of four subunits: a flavoprotein (FP), an iron-sulfur protein (IP), and a cytochrome b composed of a large and a small subunit. The cofactor is [2Fe-2S] cluster. [3Fe-4S] cluster is required as a cofactor. It depends on [4Fe-4S] cluster as a cofactor.

Its subcellular location is the mitochondrion inner membrane. The enzyme catalyses a quinone + succinate = fumarate + a quinol. It participates in carbohydrate metabolism; tricarboxylic acid cycle; fumarate from succinate (eukaryal route): step 1/1. Its function is as follows. Iron-sulfur protein (IP) subunit of succinate dehydrogenase (SDH) that is involved in complex II of the mitochondrial electron transport chain and is responsible for transferring electrons from succinate to ubiquinone (coenzyme Q). This is Succinate dehydrogenase [ubiquinone] iron-sulfur subunit, mitochondrial (SDH2) from Uromyces fabae (Rust fungus).